The sequence spans 1080 residues: Presequence protease 2, chloroplastic/mitochondrial (1080 aa).

Residues 1–84 (MLRSLTCSST…NGQFSRLSIR (84 aa)) constitute a chloroplast and mitochondrion transit peptide. Residue His-161 participates in Zn(2+) binding. The Proton acceptor role is filled by Glu-164. His-165 serves as a coordination point for Zn(2+). Glu-239 is a catalytic residue. A Zn(2+)-binding site is contributed by Glu-261. Residue Arg-704 coordinates Mg(2+).

Belongs to the peptidase M16 family. PreP subfamily. As to quaternary structure, homodimer. Zn(2+) serves as cofactor. Mg(2+) is required as a cofactor. In terms of tissue distribution, expressed in leaves, flowers and roots, but not detected in siliques and shoots.

It localises to the plastid. The protein localises to the chloroplast stroma. Its subcellular location is the mitochondrion matrix. Completely inhibited by the metal chelator orthophenanthroline. Functionally, ATP-independent protease that degrades both mitochondrial and chloroplastic transit peptides after their cleavage. Also degrades other unstructured peptides. Specific for peptides in the range of 10 to 65 residues. Shows a preference for cleavage after small polar residues and before basic residues, but without any positional preference. This Arabidopsis thaliana (Mouse-ear cress) protein is Presequence protease 2, chloroplastic/mitochondrial (PREP2).